A 493-amino-acid chain; its full sequence is Stage V sporulation protein AF (493 aa).

5 consecutive transmembrane segments (helical) span residues 296-316 (FFGI…VLQP), 334-354 (IPII…RMAA), 363-383 (TAMG…VGLF), 387-407 (VILY…YELS), and 418-438 (MILV…VLII).

It belongs to the GerABKA family.

The protein localises to the cell membrane. The sequence is that of Stage V sporulation protein AF (spoVAF) from Bacillus subtilis (strain 168).